Consider the following 318-residue polypeptide: Protein teg (318 aa).

The 176-residue stretch at 7–182 folds into the PNPLA domain; the sequence is ITFDGGGTLG…VATNTSTASI (176 aa). Positions 11 to 16 match the GXGXXG motif; it reads GGGTLG. A GXSXG motif is present at residues 42-46; sequence GNSIG. The active-site Nucleophile is the Ser-44. The Proton acceptor role is filled by Asp-169.

In terms of biological role, probable lipid hydrolase. This is Protein teg (teg) from Priestia megaterium (strain ATCC 14581 / DSM 32 / CCUG 1817 / JCM 2506 / NBRC 15308 / NCIMB 9376 / NCTC 10342 / NRRL B-14308 / VKM B-512 / Ford 19) (Bacillus megaterium).